The primary structure comprises 388 residues: Chorismate synthase (388 aa).

Residues R39 and R45 each contribute to the NADP(+) site. FMN contacts are provided by residues 130-132 (RSS), 251-252 (NA), G296, 311-315 (KPIPT), and R337.

It belongs to the chorismate synthase family. In terms of assembly, homotetramer. It depends on FMNH2 as a cofactor.

It carries out the reaction 5-O-(1-carboxyvinyl)-3-phosphoshikimate = chorismate + phosphate. It functions in the pathway metabolic intermediate biosynthesis; chorismate biosynthesis; chorismate from D-erythrose 4-phosphate and phosphoenolpyruvate: step 7/7. In terms of biological role, catalyzes the anti-1,4-elimination of the C-3 phosphate and the C-6 proR hydrogen from 5-enolpyruvylshikimate-3-phosphate (EPSP) to yield chorismate, which is the branch point compound that serves as the starting substrate for the three terminal pathways of aromatic amino acid biosynthesis. This reaction introduces a second double bond into the aromatic ring system. The protein is Chorismate synthase of Streptococcus agalactiae serotype Ia (strain ATCC 27591 / A909 / CDC SS700).